Consider the following 450-residue polypeptide: Bifunctional protein GlmU (450 aa).

The interval Met1–Arg217 is pyrophosphorylase. Residues Leu6–Gly9, Lys20, Gln68, Gly73–Thr74, Tyr95–Asp97, Gly134, Glu146, Asn161, and Asn215 contribute to the UDP-N-acetyl-alpha-D-glucosamine site. Asp97 provides a ligand contact to Mg(2+). Asn215 contributes to the Mg(2+) binding site. Residues Ile218–Gln238 are linker. The segment at Gly239 to Lys450 is N-acetyltransferase. Positions 320 and 338 each coordinate UDP-N-acetyl-alpha-D-glucosamine. The active-site Proton acceptor is His350. UDP-N-acetyl-alpha-D-glucosamine-binding residues include Tyr353 and Asn364. Acetyl-CoA is bound by residues Ala367, Asn373–Tyr374, Ser392, Ala410, and Arg427.

It in the N-terminal section; belongs to the N-acetylglucosamine-1-phosphate uridyltransferase family. The protein in the C-terminal section; belongs to the transferase hexapeptide repeat family. As to quaternary structure, homotrimer. The cofactor is Mg(2+).

It localises to the cytoplasm. It carries out the reaction alpha-D-glucosamine 1-phosphate + acetyl-CoA = N-acetyl-alpha-D-glucosamine 1-phosphate + CoA + H(+). The catalysed reaction is N-acetyl-alpha-D-glucosamine 1-phosphate + UTP + H(+) = UDP-N-acetyl-alpha-D-glucosamine + diphosphate. The protein operates within nucleotide-sugar biosynthesis; UDP-N-acetyl-alpha-D-glucosamine biosynthesis; N-acetyl-alpha-D-glucosamine 1-phosphate from alpha-D-glucosamine 6-phosphate (route II): step 2/2. It functions in the pathway nucleotide-sugar biosynthesis; UDP-N-acetyl-alpha-D-glucosamine biosynthesis; UDP-N-acetyl-alpha-D-glucosamine from N-acetyl-alpha-D-glucosamine 1-phosphate: step 1/1. Its pathway is bacterial outer membrane biogenesis; LPS lipid A biosynthesis. Functionally, catalyzes the last two sequential reactions in the de novo biosynthetic pathway for UDP-N-acetylglucosamine (UDP-GlcNAc). The C-terminal domain catalyzes the transfer of acetyl group from acetyl coenzyme A to glucosamine-1-phosphate (GlcN-1-P) to produce N-acetylglucosamine-1-phosphate (GlcNAc-1-P), which is converted into UDP-GlcNAc by the transfer of uridine 5-monophosphate (from uridine 5-triphosphate), a reaction catalyzed by the N-terminal domain. This chain is Bifunctional protein GlmU, found in Thermosipho melanesiensis (strain DSM 12029 / CIP 104789 / BI429).